Here is a 354-residue protein sequence, read N- to C-terminus: Gibberellin receptor GID1 (354 aa).

An Involved in the stabilization of the negatively charged intermediate by the formation of the oxyanion hole motif is present at residues 120–122; sequence HGG. Gibberellin A3-binding positions include 122–123, Tyr-134, Ser-198, and Asp-250; that span reads GS. Gibberellin A4 is bound by residues 122–123, Tyr-134, and Ser-198; that span reads GS. Ser-198 is an active-site residue. The active site involves Asp-296. Gly-327 contacts gibberellin A3. Gly-327 provides a ligand contact to gibberellin A4.

This sequence belongs to the 'GDXG' lipolytic enzyme family. Interacts with the DELLA protein SLR1 in a GA-dependent manner, resulting in subsequent SLR1 degradation.

It is found in the nucleus. Functions as a soluble gibberellin (GA) receptor. GA is an essential hormone that regulates growth and development in plants. Binds with high affinity the biologically active GAs such as GA1, GA3 and GA4, but has low or no affinity for the biologically inactive GAs. Upon GA-binding, it interacts with the DELLA protein SLR1, a repressor of GA signaling. This leads to SLR1 degradation by the proteasome, allowing the GA signaling pathway. The chain is Gibberellin receptor GID1 from Oryza sativa subsp. japonica (Rice).